A 433-amino-acid polypeptide reads, in one-letter code: C2H2 type master regulator of conidiophore development brlA (433 aa).

Disordered stretches follow at residues 24–49 (SDCP…LYSQ), 240–269 (KSHT…ISGH), and 286–306 (MMQR…LRSN). The segment covering 30-49 (TSSFSPLDSPTPTPTSLYSQ) has biased composition (low complexity). Polar residues predominate over residues 240–264 (KSHTPSTPHRSVSMGTPSGSDTPVS). The span at 288 to 302 (QRHRQPSRKPSKKQL) shows a compositional bias: basic residues. 2 C2H2-type zinc fingers span residues 321–345 (FKCK…MKSH) and 351–376 (HVCW…TKTH). Positions 391–423 (ETSQDFDPDFRGQLTPDGRPIYGSKLEDSMPDC) are disordered.

It localises to the nucleus. In terms of biological role, brlA, abaA and wetA are pivotal regulators of conidiophore development and conidium maturation. They act individually and together to regulate their own expression and that of numerous other sporulation-specific genes. Binds promoters of target genes at brlA response elements (BREs) containing the conserved sequence 5'-(C/A)(A/G)AGGG(G/A)-3'. Regulates genes involved in conidiogenesis. The polypeptide is C2H2 type master regulator of conidiophore development brlA (Penicillium digitatum (strain PHI26 / CECT 20796) (Green mold)).